The primary structure comprises 386 residues: Heat-inducible transcription repressor HrcA (386 aa).

This sequence belongs to the HrcA family.

Negative regulator of class I heat shock genes (grpE-dnaK-dnaJ and groELS operons). Prevents heat-shock induction of these operons. This is Heat-inducible transcription repressor HrcA from Chlamydia felis (strain Fe/C-56) (Chlamydophila felis).